We begin with the raw amino-acid sequence, 103 residues long: Small ubiquitin-related modifier 3 (103 aa).

Glycyl lysine isopeptide (Lys-Gly) (interchain with G-Cter in SUMO2) cross-links involve residues K5 and K7. K11 participates in a covalent cross-link: Glycyl lysine isopeptide (Lys-Gly) (interchain with G-Cter in SUMO); alternate. K11 is covalently cross-linked (Glycyl lysine isopeptide (Lys-Gly) (interchain with G-Cter in SUMO2); alternate). The 78-residue stretch at 15 to 92 (DHINLKVAGQ…IDVFQQQTGG (78 aa)) folds into the Ubiquitin-like domain. G92 participates in a covalent cross-link: Glycyl lysine isopeptide (Gly-Lys) (interchain with K-? in acceptor proteins). Residues 93-103 (VPESSLAGHSF) constitute a propeptide that is removed on maturation.

This sequence belongs to the ubiquitin family. SUMO subfamily. Covalently attached to a number of proteins. Interacts with BMAL1. Interacts with USP25 (via ts SIM domain); the interaction sumoylates USP25 and inhibits its ubiquitin hydrolyzing activity. Interacts with SAE2 and UBE2I. Polymeric chains can be formed through Lys-11 cross-linking. In terms of processing, cleavage of precursor form by SENP1, SENP2 or SENP5 is necessary for function. As to expression, expressed predominantly in liver.

The protein resides in the cytoplasm. Its subcellular location is the nucleus. It localises to the PML body. Functionally, ubiquitin-like protein which can be covalently attached to target lysines either as a monomer or as a lysine-linked polymer. Does not seem to be involved in protein degradation and may function as an antagonist of ubiquitin in the degradation process. Plays a role in a number of cellular processes such as nuclear transport, DNA replication and repair, mitosis and signal transduction. Covalent attachment to its substrates requires prior activation by the E1 complex SAE1-SAE2 and linkage to the E2 enzyme UBE2I, and can be promoted by an E3 ligase such as PIAS1-4, RANBP2 or CBX4. Plays a role in the regulation of sumoylation status of SETX. The protein is Small ubiquitin-related modifier 3 of Homo sapiens (Human).